The chain runs to 493 residues: Cobyric acid synthase (493 aa).

The GATase cobBQ-type domain maps to 252-441 (DLKITVIRLP…LHGLLENGPW (190 aa)). Cysteine 333 serves as the catalytic Nucleophile. Histidine 433 is an active-site residue.

This sequence belongs to the CobB/CobQ family. CobQ subfamily.

It functions in the pathway cofactor biosynthesis; adenosylcobalamin biosynthesis. Catalyzes amidations at positions B, D, E, and G on adenosylcobyrinic A,C-diamide. NH(2) groups are provided by glutamine, and one molecule of ATP is hydrogenolyzed for each amidation. The polypeptide is Cobyric acid synthase (Thermosynechococcus vestitus (strain NIES-2133 / IAM M-273 / BP-1)).